The primary structure comprises 318 residues: MSTVFIDRKDIEIRVDGNSISFYAKGKKDGSLPLSPLKRVVIVGNVKIETSVLYKLVNHGITVLFLTGKLKYSGILNGPLHNNGLLRVKQYQKSLSGFSLKFAKELIKRKIVSQRDFLSEIREIKKALAMQADRAIEILNKAISNIEVTPISIDSLRGIEGAASSIYFITYSKIFPNSLKFVRRIKRPPKDPVNAMLSLCYTLLHYEIVREIQLIGLDPTIGFYHQFEYGRESLACDLVELFRVNVDRFVYELFKAKHLGNRDFMKDEESGGVYLKKTGRKKFYPLYEQWVQQQRTIWRGEVQGFARRILEEKDIISG.

Mn(2+) is bound by residues Glu-160, His-225, and Glu-240.

The protein belongs to the CRISPR-associated endonuclease Cas1 family. As to quaternary structure, homodimer, forms a heterotetramer with a Cas2 homodimer. Requires Mg(2+) as cofactor. The cofactor is Mn(2+).

Functionally, CRISPR (clustered regularly interspaced short palindromic repeat), is an adaptive immune system that provides protection against mobile genetic elements (viruses, transposable elements and conjugative plasmids). CRISPR clusters contain spacers, sequences complementary to antecedent mobile elements, and target invading nucleic acids. CRISPR clusters are transcribed and processed into CRISPR RNA (crRNA). Acts as a dsDNA endonuclease. Involved in the integration of spacer DNA into the CRISPR cassette. In Thermodesulfovibrio yellowstonii (strain ATCC 51303 / DSM 11347 / YP87), this protein is CRISPR-associated endonuclease Cas1 1.